A 158-amino-acid polypeptide reads, in one-letter code: SsrA-binding protein (158 aa).

The segment covering 133 to 152 (KRQTLREQQDNREAQREMRE) has biased composition (basic and acidic residues). The tract at residues 133–158 (KRQTLREQQDNREAQREMRERNRRRG) is disordered.

The protein belongs to the SmpB family.

The protein resides in the cytoplasm. Required for rescue of stalled ribosomes mediated by trans-translation. Binds to transfer-messenger RNA (tmRNA), required for stable association of tmRNA with ribosomes. tmRNA and SmpB together mimic tRNA shape, replacing the anticodon stem-loop with SmpB. tmRNA is encoded by the ssrA gene; the 2 termini fold to resemble tRNA(Ala) and it encodes a 'tag peptide', a short internal open reading frame. During trans-translation Ala-aminoacylated tmRNA acts like a tRNA, entering the A-site of stalled ribosomes, displacing the stalled mRNA. The ribosome then switches to translate the ORF on the tmRNA; the nascent peptide is terminated with the 'tag peptide' encoded by the tmRNA and targeted for degradation. The ribosome is freed to recommence translation, which seems to be the essential function of trans-translation. In Pseudarthrobacter chlorophenolicus (strain ATCC 700700 / DSM 12829 / CIP 107037 / JCM 12360 / KCTC 9906 / NCIMB 13794 / A6) (Arthrobacter chlorophenolicus), this protein is SsrA-binding protein.